The primary structure comprises 647 residues: Nucleoside triphosphatase I (647 aa).

The Helicase ATP-binding domain maps to 48–212 (FIGLKNLNSM…NNLIGLLRPN (165 aa)). 61 to 68 (WDTGTGKT) contributes to the ATP binding site. The DEXH box signature appears at 150 to 153 (DEVH). The Helicase C-terminal domain maps to 378 to 541 (YIEACRIILN…KINVVFDLLK (164 aa)). The interval 467 to 533 (DIIILDMPWN…DIIKNKQGKI (67 aa)) is binding to the cap-specific mRNA (nucleoside-2'-O-)-methyltransferase.

It belongs to the helicase family. NPH I subfamily. In terms of assembly, monomer. Interacts (via C-terminus) with RAP94 (via N-terminus). Interacts with the cap-specific mRNA (nucleoside-2'-O-)-methyltransferase.

The protein resides in the virion. The enzyme catalyses a ribonucleoside 5'-triphosphate + H2O = a ribonucleoside 5'-diphosphate + phosphate + H(+). Functionally, DNA-dependent ATPase required for providing the needed energy to achieve the termination of early transcripts. Acts in concert with the RAP94 subunit of the virion RNA polymerase and the capping enzyme/VTF to catalyze release of UUUUUNU-containing nascent RNA from the elongation complex. NPH-I must bind ssDNA in order to exhibit ATPase activity. The polypeptide is Nucleoside triphosphatase I (NPH1) (Choristoneura fumiferana (Spruce budworm moth)).